A 376-amino-acid polypeptide reads, in one-letter code: Alcohol dehydrogenase class-3 (376 aa).

Zn(2+) is bound by residues Cys40, His62, Cys92, Cys95, Cys98, Cys106, and Cys170.

It belongs to the zinc-containing alcohol dehydrogenase family. Class-III subfamily. As to quaternary structure, homodimer. Requires Zn(2+) as cofactor.

Its subcellular location is the cytoplasm. It catalyses the reaction a primary alcohol + NAD(+) = an aldehyde + NADH + H(+). It carries out the reaction a secondary alcohol + NAD(+) = a ketone + NADH + H(+). The catalysed reaction is S-(hydroxymethyl)glutathione + NADP(+) = S-formylglutathione + NADPH + H(+). The enzyme catalyses S-(hydroxymethyl)glutathione + NAD(+) = S-formylglutathione + NADH + H(+). Oxidizes long-chain aliphatic alcohols, long-chain hydroxylated fatty acids and S-hydroxymethylglutathione (hmGSH) in increasing order of preference. Shows little or no activity with short-chain aliphatic alcohols. The protein is Alcohol dehydrogenase class-3 (adhI) of Cereibacter sphaeroides (strain ATCC 17023 / DSM 158 / JCM 6121 / CCUG 31486 / LMG 2827 / NBRC 12203 / NCIMB 8253 / ATH 2.4.1.) (Rhodobacter sphaeroides).